The following is an 80-amino-acid chain: ATP synthase subunit c (80 aa).

Transmembrane regions (helical) follow at residues 11-31 (MAAA…IGIL) and 53-73 (FFVV…LGLY).

It belongs to the ATPase C chain family. F-type ATPases have 2 components, F(1) - the catalytic core - and F(0) - the membrane proton channel. F(1) has five subunits: alpha(3), beta(3), gamma(1), delta(1), epsilon(1). F(0) has three main subunits: a(1), b(2) and c(10-14). The alpha and beta chains form an alternating ring which encloses part of the gamma chain. F(1) is attached to F(0) by a central stalk formed by the gamma and epsilon chains, while a peripheral stalk is formed by the delta and b chains.

It localises to the cell inner membrane. Functionally, f(1)F(0) ATP synthase produces ATP from ADP in the presence of a proton or sodium gradient. F-type ATPases consist of two structural domains, F(1) containing the extramembraneous catalytic core and F(0) containing the membrane proton channel, linked together by a central stalk and a peripheral stalk. During catalysis, ATP synthesis in the catalytic domain of F(1) is coupled via a rotary mechanism of the central stalk subunits to proton translocation. Key component of the F(0) channel; it plays a direct role in translocation across the membrane. A homomeric c-ring of between 10-14 subunits forms the central stalk rotor element with the F(1) delta and epsilon subunits. The chain is ATP synthase subunit c from Erwinia tasmaniensis (strain DSM 17950 / CFBP 7177 / CIP 109463 / NCPPB 4357 / Et1/99).